The sequence spans 348 residues: Phosphatidylglycerophosphate phosphatase 1, chloroplastic/mitochondrial (348 aa).

Residues 1–58 (MQTPSMAASTTSYYPIPKSFLLSPPRHKRNPNLISCSTKPICSPPPPSSSSSSPLQTT) constitute a chloroplast and mitochondrion transit peptide. Residues 17–67 (PKSFLLSPPRHKRNPNLISCSTKPICSPPPPSSSSSSPLQTTTTHRSQKQN) form a disordered region. Polar residues predominate over residues 55–67 (LQTTTTHRSQKQN). The Phosphoryl acceptor signature appears at 184-188 (DKDNT).

This sequence belongs to the HAD-like hydrolase superfamily. Requires Mg(2+) as cofactor. Mainly expressed in inflorescences (especially in pollen) and, to a lower extent, in leaves, stems and siliques, as well as, at low levels, in roots. Mostly expressed in hypocotyl, vasculatures, trichomes, guard cells and stigmas.

It is found in the plastid. The protein resides in the chloroplast. It localises to the mitochondrion. The enzyme catalyses a 1,2-diacyl-sn-glycero-3-phospho-(1'-sn-glycero-3'-phosphate) + H2O = a 1,2-diacyl-sn-glycero-3-phospho-(1'-sn-glycerol) + phosphate. Its pathway is phospholipid metabolism; phosphatidylglycerol biosynthesis; phosphatidylglycerol from CDP-diacylglycerol: step 2/2. In terms of biological role, phosphatidylglycerophosphate (PGP) phosphatase involved in the biosynthesis of phosphatidylglycerol (PG), a phosphoglycerolipid predominantly present in chloroplastic thylakoid membranes and which has important photosynthetic function; seems to use PGP 34:3, PGP 34:2 and PGP 34:1 as substrates. Required for thylakoid membranes development and chloroplast function. Necessary for normal cell growth. Required for root growth and columella cells organization. The chain is Phosphatidylglycerophosphate phosphatase 1, chloroplastic/mitochondrial from Arabidopsis thaliana (Mouse-ear cress).